The following is a 185-amino-acid chain: Elongation factor P (185 aa).

Belongs to the elongation factor P family.

Its subcellular location is the cytoplasm. Its pathway is protein biosynthesis; polypeptide chain elongation. Functionally, involved in peptide bond synthesis. Stimulates efficient translation and peptide-bond synthesis on native or reconstituted 70S ribosomes in vitro. Probably functions indirectly by altering the affinity of the ribosome for aminoacyl-tRNA, thus increasing their reactivity as acceptors for peptidyl transferase. In Bacillus cereus (strain B4264), this protein is Elongation factor P.